The primary structure comprises 832 residues: G-type lectin S-receptor-like serine/threonine-protein kinase RLK1 (832 aa).

An N-terminal signal peptide occupies residues 1 to 24; it reads MGSLSCSIIHLVLILQLQTFFVFS. Residues 25–461 lie on the Extracellular side of the membrane; that stretch reads QNIRNGSVPV…VPVTGNRAKK (437 aa). Residues Asn-29, Asn-92, Asn-100, Asn-178, Asn-240, and Asn-251 are each glycosylated (N-linked (GlcNAc...) asparagine). Positions 37 to 157 constitute a Bulb-type lectin domain; that stretch reads SLTASESQQI…GSEDSDEVLW (121 aa). The region spanning 299 to 349 is the EGF-like; atypical domain; the sequence is RDNMCSPDDALGNMACGYNNICSLGNNKRPKCECPERFVLKDPSNEYGDCL. Disulfide bonds link Cys-303/Cys-320, Cys-314/Cys-330, and Cys-332/Cys-348. The 90-residue stretch at 357–446 folds into the PAN domain; the sequence is CRPENQTANS…DSDTFIKVRN (90 aa). Asn-361 is a glycosylation site (N-linked (GlcNAc...) asparagine). Cystine bridges form between Cys-397/Cys-420 and Cys-401/Cys-407. Residue Asn-446 is glycosylated (N-linked (GlcNAc...) asparagine). A helical transmembrane segment spans residues 462–482; the sequence is LDWLIIACSVLLGTSAFVIFD. Topologically, residues 483–832 are cytoplasmic; sequence TSCSYRKTKK…SLSSDPVSLV (350 aa). Positions 531-803 constitute a Protein kinase domain; the sequence is RDFTEELGRG…NVTQMLEGVI (273 aa). ATP contacts are provided by residues 537 to 545 and Lys-563; that span reads LGRGAFGIV. The tract at residues 622–638 is caM-binding; that stretch reads RRPRPSWEDRKNIAVAI. Residue Asp-657 is the Proton acceptor of the active site.

This sequence belongs to the protein kinase superfamily. Ser/Thr protein kinase family.

The protein localises to the cell membrane. It catalyses the reaction L-seryl-[protein] + ATP = O-phospho-L-seryl-[protein] + ADP + H(+). The enzyme catalyses L-threonyl-[protein] + ATP = O-phospho-L-threonyl-[protein] + ADP + H(+). The sequence is that of G-type lectin S-receptor-like serine/threonine-protein kinase RLK1 (RLK1) from Arabidopsis thaliana (Mouse-ear cress).